A 182-amino-acid chain; its full sequence is MSRRGQQPPPQQQQAPPQKNQAGKFNPAEFVKPGLTEEEVLEIKEAFDLFDTDGTQSIDPKELKAAMTSLGFEAKNQTIYQMISDLDTDGSGQIDFAEFLKLMTARISERDSKADIQKVFNLFDSERAGVITLKDLRKVAKELGETMDDSELQEMIDRADSDGDAQVTFEDFYNIMTKKTFA.

The segment at 1–31 is disordered; sequence MSRRGQQPPPQQQQAPPQKNQAGKFNPAEFV. 4 EF-hand domains span residues 38-73, 74-109, 111-146, and 147-182; these read EEVLEIKEAFDLFDTDGTQSIDPKELKAAMTSLGFE, AKNQTIYQMISDLDTDGSGQIDFAEFLKLMTARISE, DSKADIQKVFNLFDSERAGVITLKDLRKVAKELGET, and MDDSELQEMIDRADSDGDAQVTFEDFYNIMTKKTFA. Aspartate 51, aspartate 53, threonine 55, serine 57, glutamate 62, aspartate 87, aspartate 89, serine 91, glutamine 93, and glutamate 98 together coordinate Ca(2+).

This sequence belongs to the centrin family.

The protein resides in the cytoplasm. It localises to the cytoskeleton. In terms of biological role, plays a fundamental role in microtubule organizing center structure and function. Component of the infraciliary lattice (ICL) and the ciliary basal bodies. This Paramecium tetraurelia protein is Caltractin ICL1b (Icl1b).